We begin with the raw amino-acid sequence, 121 residues long: Large ribosomal subunit protein bL19 (121 aa).

Belongs to the bacterial ribosomal protein bL19 family.

In terms of biological role, this protein is located at the 30S-50S ribosomal subunit interface and may play a role in the structure and function of the aminoacyl-tRNA binding site. This chain is Large ribosomal subunit protein bL19, found in Amoebophilus asiaticus (strain 5a2).